Reading from the N-terminus, the 570-residue chain is High-affinity hexose transporter HXT6 (570 aa).

Residues 1-60 (MSQDAAIAEQTPVEHLSAVDSASHSVLSTPSNKAERDEIKAYGEGEEHEPVVEIPKRPAS) are Cytoplasmic-facing. A helical transmembrane segment spans residues 61–81 (AYVTVSIMCIMIAFGGFVFGW). Over 82–116 (DTGTISGFINQTDFIRRFGMKHKDGTNYLSKVRTG) the chain is Extracellular. Residue asparagine 91 is glycosylated (N-linked (GlcNAc...) asparagine). The helical transmembrane segment at 117–137 (LIVSIFNIGCAIGGIILSKLG) threads the bilayer. At 138–143 (DMYGRK) the chain is on the cytoplasmic side. A helical membrane pass occupies residues 144 to 164 (VGLIVVVVIYIIGIIIQIASI). Residues 165-174 (NKWYQYFIGR) lie on the Extracellular side of the membrane. The helical transmembrane segment at 175-195 (IISGLGVGGIAVLSPMLISEV) threads the bilayer. At 196-201 (SPKHLR) the chain is on the cytoplasmic side. The helical transmembrane segment at 202–222 (GTLVSCYQLMITAGIFLGYCT) threads the bilayer. The Extracellular portion of the chain corresponds to 223–236 (NFGTKNYSNSVQWR). The N-linked (GlcNAc...) asparagine glycan is linked to asparagine 228. The helical transmembrane segment at 237–257 (VPLGLCFAWALFMIGGMTFVP) threads the bilayer. Over 258-340 (ESPRYLAEVG…IQSLQQLTGD (83 aa)) the chain is Cytoplasmic. The helical transmembrane segment at 341 to 357 (NYFFYYGTTIFKAVGLS) threads the bilayer. Residues 358-363 (DSFETS) are Extracellular-facing. A helical membrane pass occupies residues 364-381 (IVLGIVNFASTFVGIYVV). At 382–388 (ERYGRRT) the chain is on the cytoplasmic side. A helical transmembrane segment spans residues 389–409 (CLLWGAASMTACMVVYASVGV). Topologically, residues 410 to 431 (TRLWPNGQDQPSSKGAGNCMIV) are extracellular. The chain crosses the membrane as a helical span at residues 432–452 (FACFYIFCFATTWAPIPYVVV). At 453–469 (SETFPLRVKSKAMSIAT) the chain is on the cytoplasmic side. Residues 470–490 (AANWLWGFLIGFFTPFITGAI) traverse the membrane as a helical segment. Asparagine 491 is a topological domain (extracellular). The helical transmembrane segment at 492–512 (FYYGYVFMGCLVFMFFYVLLV) threads the bilayer. Residues 513 to 570 (VPETKGLTLEEVNTMWEEGVLPWKSASWVPPSRRGANYDAEEMAHDDKPLYKRMFSTK) are Cytoplasmic-facing. A Glycyl lysine isopeptide (Lys-Gly) (interchain with G-Cter in ubiquitin) cross-link involves residue lysine 560.

The protein belongs to the major facilitator superfamily. Sugar transporter (TC 2.A.1.1) family.

It localises to the membrane. High-affinity glucose transporter. The polypeptide is High-affinity hexose transporter HXT6 (HXT6) (Saccharomyces cerevisiae (strain ATCC 204508 / S288c) (Baker's yeast)).